Here is a 267-residue protein sequence, read N- to C-terminus: Acyl-[acyl-carrier-protein]--UDP-N-acetylglucosamine O-acyltransferase (267 aa).

The protein belongs to the transferase hexapeptide repeat family. LpxA subfamily. In terms of assembly, homotrimer.

The protein localises to the cytoplasm. The enzyme catalyses a (3R)-hydroxyacyl-[ACP] + UDP-N-acetyl-alpha-D-glucosamine = a UDP-3-O-[(3R)-3-hydroxyacyl]-N-acetyl-alpha-D-glucosamine + holo-[ACP]. It functions in the pathway glycolipid biosynthesis; lipid IV(A) biosynthesis; lipid IV(A) from (3R)-3-hydroxytetradecanoyl-[acyl-carrier-protein] and UDP-N-acetyl-alpha-D-glucosamine: step 1/6. Functionally, involved in the biosynthesis of lipid A, a phosphorylated glycolipid that anchors the lipopolysaccharide to the outer membrane of the cell. This chain is Acyl-[acyl-carrier-protein]--UDP-N-acetylglucosamine O-acyltransferase, found in Cupriavidus taiwanensis (strain DSM 17343 / BCRC 17206 / CCUG 44338 / CIP 107171 / LMG 19424 / R1) (Ralstonia taiwanensis (strain LMG 19424)).